Here is a 257-residue protein sequence, read N- to C-terminus: UPF0246 protein PC1_3665 (257 aa).

The protein belongs to the UPF0246 family.

In Pectobacterium carotovorum subsp. carotovorum (strain PC1), this protein is UPF0246 protein PC1_3665.